We begin with the raw amino-acid sequence, 274 residues long: Octanoyl-[GcvH]:protein N-octanoyltransferase (274 aa).

The BPL/LPL catalytic domain maps to 37 to 242 (QGNDAVVRTW…AMKTLGATLS (206 aa)). Cysteine 141 (acyl-thioester intermediate) is an active-site residue.

This sequence belongs to the octanoyltransferase LipL family.

The catalysed reaction is N(6)-octanoyl-L-lysyl-[glycine-cleavage complex H protein] + L-lysyl-[lipoyl-carrier protein] = N(6)-octanoyl-L-lysyl-[lipoyl-carrier protein] + L-lysyl-[glycine-cleavage complex H protein]. It functions in the pathway protein modification; protein lipoylation via endogenous pathway; protein N(6)-(lipoyl)lysine from octanoyl-[acyl-carrier-protein]. Functionally, catalyzes the amidotransfer (transamidation) of the octanoyl moiety from octanoyl-GcvH to the lipoyl domain of the E2 subunit of lipoate-dependent enzymes. This chain is Octanoyl-[GcvH]:protein N-octanoyltransferase, found in Macrococcus caseolyticus (strain JCSC5402) (Macrococcoides caseolyticum).